Reading from the N-terminus, the 305-residue chain is UDP-3-O-acyl-N-acetylglucosamine deacetylase (305 aa).

Positions 78, 237, and 241 each coordinate Zn(2+). Histidine 264 acts as the Proton donor in catalysis.

It belongs to the LpxC family. Requires Zn(2+) as cofactor.

It carries out the reaction a UDP-3-O-[(3R)-3-hydroxyacyl]-N-acetyl-alpha-D-glucosamine + H2O = a UDP-3-O-[(3R)-3-hydroxyacyl]-alpha-D-glucosamine + acetate. The protein operates within glycolipid biosynthesis; lipid IV(A) biosynthesis; lipid IV(A) from (3R)-3-hydroxytetradecanoyl-[acyl-carrier-protein] and UDP-N-acetyl-alpha-D-glucosamine: step 2/6. Catalyzes the hydrolysis of UDP-3-O-myristoyl-N-acetylglucosamine to form UDP-3-O-myristoylglucosamine and acetate, the committed step in lipid A biosynthesis. The sequence is that of UDP-3-O-acyl-N-acetylglucosamine deacetylase from Burkholderia mallei (strain NCTC 10247).